Consider the following 372-residue polypeptide: Ligninase LG6 (372 aa).

The first 21 residues, 1–21 (MALKQLAAAVALALSIQAAQG), serve as a signal peptide directing secretion. A propeptide spanning residues 22–28 (AAVKEKR) is cleaved from the precursor. 2 disulfides stabilise this stretch: cysteine 31–cysteine 43 and cysteine 62–cysteine 148. The active-site Proton acceptor is histidine 75. Residues aspartate 76, glycine 94, aspartate 96, and serine 98 each coordinate Ca(2+). Histidine 204 contributes to the heme b binding site. The Ca(2+) site is built by serine 205, aspartate 222, threonine 224, valine 227, and aspartate 229. Cysteine 277 and cysteine 345 are oxidised to a cystine. Asparagine 285 carries an N-linked (GlcNAc...) asparagine glycan. The segment covering 352–361 (TLTTLPGPET) has biased composition (low complexity). A disordered region spans residues 352-372 (TLTTLPGPETSVQRIQPPPGA).

Belongs to the peroxidase family. Ligninase subfamily. The cofactor is heme b. Requires Ca(2+) as cofactor.

It catalyses the reaction 1-(3,4-dimethoxyphenyl)-2-(2-methoxyphenoxy)propane-1,3-diol + H2O2 = 3,4-dimethoxybenzaldehyde + guaiacol + glycolaldehyde + H2O. The enzyme catalyses 2 (3,4-dimethoxyphenyl)methanol + H2O2 = 2 (3,4-dimethoxyphenyl)methanol radical + 2 H2O. It functions in the pathway secondary metabolite metabolism; lignin degradation. Depolymerization of lignin. Catalyzes the C(alpha)-C(beta) cleavage of the propyl side chains of lignin. This chain is Ligninase LG6 (GLG6), found in Phanerodontia chrysosporium (White-rot fungus).